A 426-amino-acid polypeptide reads, in one-letter code: Serine--tRNA ligase (426 aa).

L-serine is bound at residue T229–E231. An ATP-binding site is contributed by R260–E262. E283 is a binding site for L-serine. Residue E347–S350 coordinates ATP. S383 serves as a coordination point for L-serine.

It belongs to the class-II aminoacyl-tRNA synthetase family. Type-1 seryl-tRNA synthetase subfamily. In terms of assembly, homodimer. The tRNA molecule binds across the dimer.

It is found in the cytoplasm. The catalysed reaction is tRNA(Ser) + L-serine + ATP = L-seryl-tRNA(Ser) + AMP + diphosphate + H(+). The enzyme catalyses tRNA(Sec) + L-serine + ATP = L-seryl-tRNA(Sec) + AMP + diphosphate + H(+). It functions in the pathway aminoacyl-tRNA biosynthesis; selenocysteinyl-tRNA(Sec) biosynthesis; L-seryl-tRNA(Sec) from L-serine and tRNA(Sec): step 1/1. Functionally, catalyzes the attachment of serine to tRNA(Ser). Is also able to aminoacylate tRNA(Sec) with serine, to form the misacylated tRNA L-seryl-tRNA(Sec), which will be further converted into selenocysteinyl-tRNA(Sec). The polypeptide is Serine--tRNA ligase (Rickettsia bellii (strain RML369-C)).